The sequence spans 985 residues: SWI/SNF complex subunit SWI3D (985 aa).

Residues 1-55 are disordered; it reads MEEKRRDSAGTLAFAGSSGDSPASEPMPAPRRRGGGLKRKANALGGSNFFSSAPS. Residues 30 to 41 are compositionally biased toward basic residues; sequence PRRRGGGLKRKA. Positions 108–133 form a coiled coil; the sequence is EKPKEEEERNKAIREWEALEAKIEAD. The region spanning 145 to 242 is the SWIRM domain; the sequence is HVVPNHCGWF…FHPFPPTDTG (98 aa). The ZZ-type; degenerate zinc finger occupies 305 to 359; it reads AVEYHCNSCSADCSRKRYHCPKQADFDLCTECFNSGKFSSDMSSSDFILMEPAEA. 4 residues coordinate Zn(2+): Cys310, Cys313, Cys333, and Cys336. Residues 362 to 413 form the SANT domain; the sequence is VGSGKWTDQETLLLLEALEIFKENWNEIAEHVATKTKAQCMLHFLQMPIEDA. Basic and acidic residues-rich tracts occupy residues 428–464, 493–502, and 615–661; these read TTDL…KEVP, AEQKTPKLET, and DNSH…EKQP. 2 disordered regions span residues 428 to 502 and 591 to 814; these read TTDL…KLET and EDPP…EGKK. The segment covering 662–671 has biased composition (polar residues); it reads GSRTENSTTK. Residues 703–724 are compositionally biased toward basic and acidic residues; it reads CSGKELQEPLKDGNKLSSENKD. Polar residues predominate over residues 725-736; that stretch reads ASQSTVSQSAAD. Positions 742-776 are enriched in basic and acidic residues; sequence ASRDVEMKDTLQSEKDPEDVVKTVGEKVQLAKEEG. Residues 780-800 are compositionally biased toward polar residues; the sequence is VLSTPDKSVSQQPIGSASAPE. Positions 839–900 form a coiled coil; that stretch reads ISAAAVKAKN…EQLERSRQRL (62 aa). Residues 944–985 form a disordered region; the sequence is MAFPRPPMPRPPGFPVPGSFVAATTMTGSSDPSPGSDNVSSV. Over residues 947 to 958 the composition is skewed to pro residues; it reads PRPPMPRPPGFP. Residues 965–985 show a composition bias toward polar residues; sequence AATTMTGSSDPSPGSDNVSSV.

In terms of assembly, interacts with SWI3B, but not with BSH. Component of a RNA-directed DNA methylation (RdDM) complex that contains at least MORC6, MORC1/CRT1, MORC2, SWI3D and SUVH9. Interacts with MORC6 and SUVH9. In terms of tissue distribution, ubiquitously expressed.

The protein resides in the nucleus. In terms of biological role, component of a multiprotein complex equivalent of the SWI/SNF complex, an ATP-dependent chromatin-remodeling complex, which is required for the positive and negative regulation of gene expression of a large number of genes. It changes chromatin structure by altering DNA-histone contacts within a nucleosome, leading eventually to a change in nucleosome position, thus facilitating or repressing binding of gene-specific transcription factors. This Arabidopsis thaliana (Mouse-ear cress) protein is SWI/SNF complex subunit SWI3D (SWI3D).